Consider the following 387-residue polypeptide: Phosphoglycerate kinase (387 aa).

Substrate-binding positions include 21–23 (DLN), Arg36, and 59–62 (HLGR). Lys84 is subject to N6-acetyllysine. Substrate contacts are provided by Arg113 and Arg146. Residues Lys197, Glu314, and 340-343 (GGDT) contribute to the ATP site.

It belongs to the phosphoglycerate kinase family. Monomer.

It localises to the cytoplasm. It carries out the reaction (2R)-3-phosphoglycerate + ATP = (2R)-3-phospho-glyceroyl phosphate + ADP. Its pathway is carbohydrate degradation; glycolysis; pyruvate from D-glyceraldehyde 3-phosphate: step 2/5. The polypeptide is Phosphoglycerate kinase (Escherichia coli O139:H28 (strain E24377A / ETEC)).